A 206-amino-acid polypeptide reads, in one-letter code: Small ribosomal subunit protein uS4 (206 aa).

The S4 RNA-binding domain maps to 96–156 (TRLDNVVYRM…EKSKTQARII (61 aa)).

This sequence belongs to the universal ribosomal protein uS4 family. As to quaternary structure, part of the 30S ribosomal subunit. Contacts protein S5. The interaction surface between S4 and S5 is involved in control of translational fidelity.

Functionally, one of the primary rRNA binding proteins, it binds directly to 16S rRNA where it nucleates assembly of the body of the 30S subunit. With S5 and S12 plays an important role in translational accuracy. This is Small ribosomal subunit protein uS4 from Colwellia psychrerythraea (strain 34H / ATCC BAA-681) (Vibrio psychroerythus).